The following is a 381-amino-acid chain: Phthiodiolone/phenolphthiodiolone dimycocerosates ketoreductase (381 aa).

Belongs to the mer family. Phthiodiolone/phenolphthiodiolone dimycocerosates ketoreductase subfamily.

In terms of biological role, catalyzes the reduction of the keto moiety of phthiodiolone dimycocerosates (DIM B) and glycosylated phenolphthiodiolone dimycocerosates to form the intermediate compounds phthiotriol and glycosylated phenolphthiotriol dimycocerosates during phthiocerol dimycocerosates (DIM A) and glycosylated phenolphthiocerol dimycocerosates (PGL) biosynthesis. The chain is Phthiodiolone/phenolphthiodiolone dimycocerosates ketoreductase from Mycobacterium bovis (strain ATCC BAA-935 / AF2122/97).